The sequence spans 152 residues: UPF0178 protein Shewmr7_1635 (152 aa).

Belongs to the UPF0178 family.

This Shewanella sp. (strain MR-7) protein is UPF0178 protein Shewmr7_1635.